A 1063-amino-acid chain; its full sequence is Coiled-coil domain-containing protein 187 (1063 aa).

7 disordered regions span residues 1–41, 62–184, 219–278, 300–319, 392–484, 496–539, and 551–658; these read MPTL…AADW, RWPG…SRLH, RVEA…KDED, PPPVLRRHHSKDPSRDPALT, RKGG…ERLG, GQAC…ATQP, and WEDP…LEEK. Residues 111 to 124 show a composition bias toward low complexity; sequence SSVSSGRLSCSSGG. Residues 146-160 show a composition bias toward basic and acidic residues; it reads RKSDARLEQLRDKIR. The segment covering 163 to 181 has biased composition (polar residues); that stretch reads AWQQGSCASLGTSAPSSAS. Positions 219–233 are enriched in basic and acidic residues; sequence RVEAKASHGQGRELS. Basic and acidic residues-rich tracts occupy residues 431-442 and 472-484; these read TERKHSSLERAR and SFQRPESPHERLG. A compositionally biased stretch (low complexity) spans 508 to 517; sequence QRQGPSSQRP. A coiled-coil region spans residues 816–851; the sequence is HLRHKQAQLQALETTAKVLKQRVDSLTAKLQGAEAL. Residues 1010 to 1030 are disordered; the sequence is PRSCGKGDPADRPWAGWSGGR.

The polypeptide is Coiled-coil domain-containing protein 187 (Homo sapiens (Human)).